Consider the following 560-residue polypeptide: MNIDVVLLLKQNPILLIFVVLSIGLAIGKIRFGSLQLGNSIGVLITSLIMGHLGFSFNADALTIGFMLFIYCVGIEAGPNFFGIFFRDGKHYLILSLVVLSTAIALTYFCSEYLGLGFGLSAGMMAGALTATPILVGAQDALNSGLAEVPRNMDLGLVIENLSVGYAMAYLVGLISMIMFARLIPKLQKVNLHDSAEQIAQERGLGTSGQRKVYLPIIRAYRVGPELITWTDGKNLRELGIYRQTGCYIERIRRNGILAHPDGDAILQEGDEIALVGFPDSHARLDPSFRNGKEVFDRNLLDLRIVEEEIVVKSDNIAGKRLSDLNLSEYGCFLNRVVRAQIEMPMDLNIVLSKGDVLQVSGEKSRVHGLAEKIGFISIHSQMADLTAFCSFFILGILFGLITMTFGQVSFGLGNAVGLLLSGIMLGFLRANHPTFGYVPQGALNMVKDLGLMFFMVGIGLSAGGKIFEHLTQVGPQVIGIALIVSVLPVFFAYLVGAYALKMNRALLFGAIIGARTCAPAMDIVNDHARSTIPALGYAGTYAIANILMTLAGTFIIIIS.

5 consecutive transmembrane segments (helical) span residues 5–25 (VVLL…SIGL), 37–57 (LGNS…GFSF), 66–86 (FMLF…GIFF), 91–111 (HYLI…YFCS), and 155–175 (LGLV…VGLI). RCK C-terminal domains follow at residues 203–292 (RGLG…FRNG) and 293–376 (KEVF…KIGF). The next 6 membrane-spanning stretches (helical) occupy residues 386–406 (LTAF…TMTF), 409–429 (VSFG…LGFL), 450–470 (LGLM…IFEH), 478–498 (VIGI…LVGA), 506–526 (ALLF…DIVN), and 539–559 (AGTY…IIII).

This sequence belongs to the AAE transporter (TC 2.A.81) family. YbjL subfamily.

The protein localises to the cell membrane. This is Putative transport protein VS_1837 from Vibrio atlanticus (strain LGP32) (Vibrio splendidus (strain Mel32)).